Reading from the N-terminus, the 551-residue chain is Delta-selinene synthase TPS7FN (551 aa).

(2E,6E)-farnesyl diphosphate contacts are provided by Arg266, Asp303, Asp307, Arg444, and Asp447. Residues Asp303 and Asp307 each coordinate Mg(2+). Residues 303-307 (DDIYD) carry the DDXXD motif motif. Residues Asp447, Ser451, and Glu455 each coordinate Mg(2+).

This sequence belongs to the terpene synthase family. Tpsb subfamily. Mg(2+) is required as a cofactor. The cofactor is Mn(2+).

It catalyses the reaction (2E,6E)-farnesyl diphosphate = delta-selinene + diphosphate. The enzyme catalyses (2E)-geranyl diphosphate = beta-myrcene + diphosphate. The catalysed reaction is (2E)-geranyl diphosphate = (4S)-limonene + diphosphate. It carries out the reaction (2E,6E)-farnesyl diphosphate + H2O = selina-6-en-4-ol + diphosphate. It functions in the pathway secondary metabolite biosynthesis; terpenoid biosynthesis. Functionally, involved in sesquiterpene olefins biosynthesis, constituants of cannabinoids and terpenoids-rich resins. Catalyzes mainly the conversion of (2E)-farnesyl diphosphate to delta-selinene, and also produces minor products such as selina-6-en-4-ol. Can also use (2E)-geranyl diphosphate as substrate with low efficiency, producing minor amounts of myrcene and limonene. The polypeptide is Delta-selinene synthase TPS7FN (Cannabis sativa (Hemp)).